The primary structure comprises 98 residues: Nucleoid-associated protein pc0477 (98 aa).

Belongs to the YbaB/EbfC family. As to quaternary structure, homodimer.

It is found in the cytoplasm. It localises to the nucleoid. Functionally, binds to DNA and alters its conformation. May be involved in regulation of gene expression, nucleoid organization and DNA protection. The chain is Nucleoid-associated protein pc0477 from Protochlamydia amoebophila (strain UWE25).